The sequence spans 279 residues: Large ribosomal subunit protein uL2 (279 aa).

Disordered stretches follow at residues Leu-34 to Gly-55 and Arg-221 to Lys-279. The span at Ser-40–Gly-55 shows a compositional bias: basic residues. Residues Met-232–Gly-242 show a composition bias toward gly residues. Residues Leu-259–Lys-279 show a composition bias toward basic residues.

It belongs to the universal ribosomal protein uL2 family. As to quaternary structure, part of the 50S ribosomal subunit. Forms a bridge to the 30S subunit in the 70S ribosome.

Functionally, one of the primary rRNA binding proteins. Required for association of the 30S and 50S subunits to form the 70S ribosome, for tRNA binding and peptide bond formation. It has been suggested to have peptidyltransferase activity; this is somewhat controversial. Makes several contacts with the 16S rRNA in the 70S ribosome. This is Large ribosomal subunit protein uL2 from Chlorobium phaeobacteroides (strain BS1).